The primary structure comprises 269 residues: 4-hydroxy-tetrahydrodipicolinate reductase (269 aa).

NAD(+) is bound by residues 9-14, aspartate 35, 102-104, and 128-131; these read GCAGKM, GTT, and APNF. The Proton donor/acceptor role is filled by histidine 158. Residue histidine 159 participates in (S)-2,3,4,5-tetrahydrodipicolinate binding. The active-site Proton donor is lysine 162. 168-169 contacts (S)-2,3,4,5-tetrahydrodipicolinate; the sequence is GT.

The protein belongs to the DapB family.

The protein resides in the cytoplasm. It carries out the reaction (S)-2,3,4,5-tetrahydrodipicolinate + NAD(+) + H2O = (2S,4S)-4-hydroxy-2,3,4,5-tetrahydrodipicolinate + NADH + H(+). The enzyme catalyses (S)-2,3,4,5-tetrahydrodipicolinate + NADP(+) + H2O = (2S,4S)-4-hydroxy-2,3,4,5-tetrahydrodipicolinate + NADPH + H(+). Its pathway is amino-acid biosynthesis; L-lysine biosynthesis via DAP pathway; (S)-tetrahydrodipicolinate from L-aspartate: step 4/4. In terms of biological role, catalyzes the conversion of 4-hydroxy-tetrahydrodipicolinate (HTPA) to tetrahydrodipicolinate. The sequence is that of 4-hydroxy-tetrahydrodipicolinate reductase from Gloeobacter violaceus (strain ATCC 29082 / PCC 7421).